Here is a 488-residue protein sequence, read N- to C-terminus: Acetyl-CoA decarbonylase/synthase complex subunit gamma (488 aa).

A 4Fe-4S domain is found at 1–61 (MPKKISAMDI…FEKNKKKIIE (61 aa)). [4Fe-4S] cluster-binding residues include C19, C22, C27, and C44.

In terms of assembly, heterodimer of delta and gamma chains. The ACDS complex is made up of alpha, epsilon, beta, gamma and delta chains with a probable stoichiometry of (alpha(2)epsilon(2))(4)-beta(8)-(gamma(1)delta(1))(8). It depends on corrinoid as a cofactor. [4Fe-4S] cluster serves as cofactor.

The enzyme catalyses 5,6,7,8-tetrahydrosarcinapterin + methyl-Co(III)-[corrinoid Fe-S protein] = 5-methyltetrahydrosarcinapterin + Co(I)-[corrinoid Fe-S protein] + H(+). In terms of biological role, part of a complex that catalyzes the reversible cleavage of acetyl-CoA, allowing autotrophic growth from CO(2). The protein is Acetyl-CoA decarbonylase/synthase complex subunit gamma of Methanocaldococcus jannaschii (strain ATCC 43067 / DSM 2661 / JAL-1 / JCM 10045 / NBRC 100440) (Methanococcus jannaschii).